A 343-amino-acid chain; its full sequence is 3-hydroxy-3-methylglutaryl-CoA lyase, cytoplasmic (343 aa).

Residue Gly-2 is the site of N-myristoyl glycine attachment. Positions 48-315 constitute a Pyruvate carboxyltransferase domain; that stretch reads VKIVEVGPRD…NTGVDLYKVM (268 aa). A substrate-binding site is contributed by Arg-56. 3 residues coordinate a divalent metal cation: Asp-57, His-248, and His-250. Cys-281 is an active-site residue. Asn-290 contacts a divalent metal cation.

This sequence belongs to the HMG-CoA lyase family. It depends on a divalent metal cation as a cofactor.

It is found in the cytoplasm. The protein localises to the cytosol. It localises to the endoplasmic reticulum membrane. The enzyme catalyses (3S)-3-hydroxy-3-methylglutaryl-CoA = acetoacetate + acetyl-CoA. It participates in metabolic intermediate metabolism; (S)-3-hydroxy-3-methylglutaryl-CoA degradation; acetoacetate from (S)-3-hydroxy-3-methylglutaryl-CoA: step 1/1. Non-mitochondrial 3-hydroxy-3-methylglutaryl-CoA lyase that catalyzes a cation-dependent cleavage of (S)-3-hydroxy-3-methylglutaryl-CoA into acetyl-CoA and acetoacetate, a key step in ketogenesis, the products of which support energy production in nonhepatic animal tissues. The polypeptide is 3-hydroxy-3-methylglutaryl-CoA lyase, cytoplasmic (Hmgcll1) (Mus musculus (Mouse)).